A 507-amino-acid polypeptide reads, in one-letter code: Dolichyl pyrophosphate Man9GlcNAc2 alpha-1,3-glucosyltransferase (507 aa).

Residues 1–2 (ME) lie on the Cytoplasmic side of the membrane. A helical membrane pass occupies residues 3–23 (SWPWMAVVVLLGLTVRWTVSL). The Lumenal segment spans residues 24–114 (SSYSGAGKPP…SQAHKLFMRA (91 aa)). The N-linked (GlcNAc...) asparagine glycan is linked to N59. A helical transmembrane segment spans residues 115–135 (TVLAADLLIYVPAVLLYCYSL). Residues 136–143 (KEISPKRK) lie on the Cytoplasmic side of the membrane. The chain crosses the membrane as a helical span at residues 144–164 (IASALCILLYPGLILIDYGHF). Residues 165 to 172 (QYNSVSLG) lie on the Lumenal side of the membrane. Residues 173–193 (FALWGVLGVSWDWDLLGSLAF) form a helical membrane-spanning segment. At 194–229 (CLALNYKQMELYHSLPFFCFLLGKCFKKGLKGKGLA) the chain is on the cytoplasmic side. The chain crosses the membrane as a helical span at residues 230–250 (LFIRIACTVLASFLLCWLPFL). Residues 251 to 297 (TEREHALQVVRRLFPVDRGLFEDKVANIWCSVNVFLKIKDTLPRHIQ) lie on the Lumenal side of the membrane. Residues 298–318 (IAISFCFTLLSLLPACIKLTV) traverse the membrane as a helical segment. Residues 319-332 (RPSCKGFRFTLVSC) are Cytoplasmic-facing. The helical transmembrane segment at 333-353 (ALSFFLFSFQVHEKSILLVSL) threads the bilayer. The Lumenal portion of the chain corresponds to 354–361 (PVCLVLTE). A helical transmembrane segment spans residues 362-382 (IPFMSTWFLLVSTFSMLPLLL). Over 383–385 (KDE) the chain is Cytoplasmic. The chain crosses the membrane as a helical span at residues 386-406 (LLLPSVVTVMAFVIACGTFFP). Residues 407-437 (MLENTSEEQLQLKSFAVSVRRHLPGFTFLPR) are Lumenal-facing. Residues 438-458 (IMQCLFLSSVITMVLLTILSV) form a helical membrane-spanning segment. Topologically, residues 459–468 (TLDPPQKLPD) are cytoplasmic. The helical transmembrane segment at 469 to 489 (LFPVLICFVSCVNFVFFLVYF) threads the bilayer. At 490–507 (NIVIMWDSKNGRNRKKIE) the chain is on the lumenal side.

This sequence belongs to the ALG6/ALG8 glucosyltransferase family.

Its subcellular location is the endoplasmic reticulum membrane. The enzyme catalyses an alpha-D-Man-(1-&gt;2)-alpha-D-Man-(1-&gt;2)-alpha-D-Man-(1-&gt;3)-[alpha-D-Man-(1-&gt;2)-alpha-D-Man-(1-&gt;3)-[alpha-D-Man-(1-&gt;2)-alpha-D-Man-(1-&gt;6)]-alpha-D-Man-(1-&gt;6)]-beta-D-Man-(1-&gt;4)-beta-D-GlcNAc-(1-&gt;4)-alpha-D-GlcNAc-diphospho-di-trans,poly-cis-dolichol + a di-trans,poly-cis-dolichyl beta-D-glucosyl phosphate = an alpha-D-Glc-(1-&gt;3)-alpha-D-Man-(1-&gt;2)-alpha-D-Man-(1-&gt;2)-alpha-D-Man-(1-&gt;3)-[alpha-D-Man-(1-&gt;2)-alpha-D-Man-(1-&gt;3)-[alpha-D-Man-(1-&gt;2)-alpha-D-Man-(1-&gt;6)]-alpha-D-Man-(1-&gt;6)]-beta-D-Man-(1-&gt;4)-beta-D-GlcNAc-(1-&gt;4)-alpha-D-GlcNAc-diphospho-di-trans,poly-cis-dolichol + a di-trans,poly-cis-dolichyl phosphate + H(+). Its pathway is protein modification; protein glycosylation. Its function is as follows. Dolichyl pyrophosphate Man9GlcNAc2 alpha-1,3-glucosyltransferase that operates in the biosynthetic pathway of dolichol-linked oligosaccharides, the glycan precursors employed in protein asparagine (N)-glycosylation. The assembly of dolichol-linked oligosaccharides begins on the cytosolic side of the endoplasmic reticulum membrane and finishes in its lumen. The sequential addition of sugars to dolichol pyrophosphate produces dolichol-linked oligosaccharides containing fourteen sugars, including two GlcNAcs, nine mannoses and three glucoses. Once assembled, the oligosaccharide is transferred from the lipid to nascent proteins by oligosaccharyltransferases. In the lumen of the endoplasmic reticulum, adds the first glucose residue from dolichyl phosphate glucose (Dol-P-Glc) onto the lipid-linked oligosaccharide intermediate Man(9)GlcNAc(2)-PP-Dol to produce Glc(1)Man(9)GlcNAc(2)-PP-Dol. Glc(1)Man(9)GlcNAc(2)-PP-Dol is a substrate for ALG8, the following enzyme in the biosynthetic pathway. This is Dolichyl pyrophosphate Man9GlcNAc2 alpha-1,3-glucosyltransferase from Mus musculus (Mouse).